Consider the following 368-residue polypeptide: G-protein coupled receptor 183-A (368 aa).

Residues 1-27 (METTSANFTQNDSNVCTNLYNHRGWAQ) are Extracellular-facing. N-linked (GlcNAc...) asparagine glycosylation is found at Asn-7 and Asn-11. A helical membrane pass occupies residues 28–53 (YFLPAMYSLICIVGLLGNVLALHVIW). The Cytoplasmic segment spans residues 54 to 73 (PNLKKINSTTLYSANLVVSD). Residues 74–91 (ILFSLALPLRVVYYARGF) traverse the membrane as a helical segment. The Extracellular portion of the chain corresponds to 92–101 (DWPMGEGLCK). A disulfide bridge links Cys-100 with Cys-178. Residues 102 to 123 (AVALLFYINMYAGVNFMTCLSV) traverse the membrane as a helical segment. Residues 124-145 (DRFIAVVLPLRFSRFRKVQKVR) lie on the Cytoplasmic side of the membrane. Residues 146 to 164 (YICGVVWVVVLMQTLPLLS) form a helical membrane-spanning segment. The Extracellular segment spans residues 165 to 189 (MPMTNIEQSGHITCMEYPNFEKIDN). The chain crosses the membrane as a helical span at residues 190–212 (LPVMLIGAVVLGFGIPVITILVC). The Cytoplasmic portion of the chain corresponds to 213-238 (YTALCLKLRHLAKSNKLTEKSGRSSK). A helical transmembrane segment spans residues 239–262 (AIGVICTVILVFVVCYSPYHVDLL). Over 263 to 282 (QYMIKKLRYDPDCSELHKFQ) the chain is Extracellular. A helical membrane pass occupies residues 283-307 (ISLHITVCFMNLNSCLDPFIYFFAC). Residues 308 to 368 (KGYKKKVLKL…SSVLLNSLEQ (61 aa)) lie on the Cytoplasmic side of the membrane.

It belongs to the G-protein coupled receptor 1 family.

The protein localises to the cell membrane. G-protein coupled receptor expressed in lymphocytes that acts as a chemotactic receptor for B-cells, T-cells, splenic dendritic cells, monocytes/macrophages and astrocytes. Receptor for oxysterol 7-alpha,25-dihydroxycholesterol (7-alpha,25-OHC) and other related oxysterols. Mediates cell positioning and movement of a number of cells by binding the 7-alpha,25-OHC ligand that forms a chemotactic gradient. Binding of 7-alpha,25-OHC mediates the correct localization of B-cells during humoral immune responses. This Danio rerio (Zebrafish) protein is G-protein coupled receptor 183-A (gpr183a).